An 89-amino-acid polypeptide reads, in one-letter code: Large ribosomal subunit protein L37-2 (89 aa).

The Zn(2+) site is built by cysteine 19, cysteine 22, cysteine 34, and cysteine 37. The segment at 19 to 37 (CRRCGNSSYHLQKSKCSQC) adopts a C4-type zinc-finger fold.

The protein belongs to the eukaryotic ribosomal protein eL37 family. Requires Zn(2+) as cofactor.

In terms of biological role, binds to the 23S rRNA. This Drosophila melanogaster (Fruit fly) protein is Large ribosomal subunit protein L37-2.